We begin with the raw amino-acid sequence, 1110 residues long: MAGLQQGCHPEGQDWTAPHWKTCRPCQGPRGLTVRHLRTVSSISVFSVVFWGVLLWADSLSLPAWARETFTLGVLGPWDCDPIFAQALPSMATQLAVDRVNQDASLLLGSQLDFKILPTGCDTPHALATFVAHRNTVAAFIGPVNPGYCPAAALLAQGWGKSLFSWACGAPEGGGALVPTLPSMADVLLSVMRHFGWARLAIVSSHQDIWVTTAQQLATAFRAHGLPIGLITSLGPGEKGATEVCKQLHSVHGLKIVVLCMHSALLGGLEQTVLLRCARKEGLTDGRLVFLPYDTLLFALPYRNRSYLVLDDDGPLQEAYDAVLTISLDTSPESHAFTATKMRGGTAANLGPEQVSPLFGTIYDAVILLAHALNHSEAHGTGLSGAHLGNHIRALDVAGFSQRIRIDGKGRRLPQYVILDTNGEGSQLVPTHILDVSTQQVQPLGTAVHFPGGSPPARDASCWFDPNTLCIRGVQPLGSLLTLTITCVLALVGGFLAYFIRLGLQQLRLLRGPHRILLTPQELTFLQRTPSRRRPHVDSGSESRSVVDGGSPQSVIQGSTRSVPAFLEHTNVALYQGEWVWLKKFEAGTAPDLRPSSLSLLRKMREMRHENVTAFLGLFVGPEVSAMVLEHCARGSLEDLLRNEDLRLDWTFKASLLLDLIRGLRYLHHRHFPHGRLKSRNCVVDTRFVLKITDHGYAEFLESHCSFRPQPAPEELLWTAPELLRGPRRPWGPGKATFKGDVFSLGIILQEVLTRDPPYCSWGLSAEEIIRKVASPPPLCRPLVSPDQGPLECIQLMQLCWEEAPDDRPSLDQIYTQFKSINQGKKTSVADSMLRMLEKYSQSLEGLVQERTEELELERRKTERLLSQMLPPSVAHALKMGTTVEPEYFDQVTIYFSDIVGFTTISALSEPIEVVGFLNDLYTMFDAVLDSHDVYKVETIGDAYMVASGLPRRNGNRHAAEIANMALEILSYAGNFRMRHAPDVPIRVRAGLHSGPCVAGVVGLTMPRYCLFGDTVNTASRMESTGLPYRIHVSRNTVQALLSLDEGYKIDVRGQTELKGKGLEETYWLTGKTGFCRSLPTPLSIQPGDPWQDHINQEIRTGFAKLARVG.

An N-terminal signal peptide occupies residues 1-66; that stretch reads MAGLQQGCHP…ADSLSLPAWA (66 aa). At 67–475 the chain is on the extracellular side; sequence RETFTLGVLG…PNTLCIRGVQ (409 aa). Cysteine 121 and cysteine 149 form a disulfide bridge. 2 N-linked (GlcNAc...) asparagine glycosylation sites follow: asparagine 304 and asparagine 374. The chain crosses the membrane as a helical span at residues 476–500; it reads PLGSLLTLTITCVLALVGGFLAYFI. Topologically, residues 501–1110 are cytoplasmic; sequence RLGLQQLRLL…TGFAKLARVG (610 aa). The tract at residues 529 to 556 is disordered; sequence TPSRRRPHVDSGSESRSVVDGGSPQSVI. The 278-residue stretch at 541–818 folds into the Protein kinase domain; sequence SESRSVVDGG…PSLDQIYTQF (278 aa). An interaction with NCALD region spans residues 880–921; the sequence is MGTTVEPEYFDQVTIYFSDIVGFTTISALSEPIEVVGFLNDL. The Guanylate cyclase domain maps to 893 to 1023; it reads TIYFSDIVGF…DTVNTASRME (131 aa).

Belongs to the adenylyl cyclase class-4/guanylyl cyclase family. In terms of assembly, interacts (via the catalytic domain) with NCALD. In terms of tissue distribution, specifically expressed in a subpopulation of olfactory sensory neurons. Expressed in the cilia of the olfactory epithelium.

The protein resides in the cell projection. It localises to the cilium membrane. The enzyme catalyses GTP = 3',5'-cyclic GMP + diphosphate. With respect to regulation, activated by Ca(2+). Activated by NCALD in a Ca(2+)-dependent fashion. Its function is as follows. Functions as an olfactory receptor activated by a urine odorant, uroguanylin. Activated as well by the volatile semiochemicals carbon disulfide (CS2) and carbon dioxide (CO2). Has guanylate cyclase activity upon binding of the ligand. Activation of GUCY2D neurons leads to the cGMP-dependent activation of the CNGA3 channels, membrane depolarization and an increase in action potential frequency. Signaling pathways activated by GUCY2D may trigger social behaviors such as acquisition of food preference. The protein is Guanylate cyclase 2D (Gucy2d) of Rattus norvegicus (Rat).